Here is a 648-residue protein sequence, read N- to C-terminus: Beta-glucuronidase (648 aa).

Residues 1–22 (MSPRRSVCWFVLGQLLCSCAVA) form the signal peptide. N-linked (GlcNAc...) asparagine glycosylation is found at Asn172 and Asn416. Residue Glu447 is the Proton donor of the active site. A glycan (N-linked (GlcNAc...) asparagine) is linked at Asn627.

The protein belongs to the glycosyl hydrolase 2 family. Homotetramer. Undergoes a post-transcriptional proteolytic cleavage near its C-terminal end, which reduces its size by approximately 3 kDa. The site of this cleavage has as yet not been determined.

Its subcellular location is the lysosome. It catalyses the reaction a beta-D-glucuronoside + H2O = D-glucuronate + an alcohol. With respect to regulation, inhibited by L-aspartic acid. Functionally, plays an important role in the degradation of dermatan and keratan sulfates. The chain is Beta-glucuronidase (Gusb) from Rattus norvegicus (Rat).